The following is a 133-amino-acid chain: Salivary cystatin-L (133 aa).

Residues 1 to 19 (MTASFALVLLLGGVAVCIA) form the signal peptide. The Cystatin domain occupies 29–115 (KANHQANPEY…VAQRTCTTVV (87 aa)).

It belongs to the cystatin family. As to expression, salivary gland.

Its subcellular location is the secreted. Its function is as follows. Inhibitor of cysteine proteinases. Inhibits host cathepsin L (CTSL) and S (CTSS). Modulates production of various cytokines and chemokines in lipopolysaccharide (LPS)-stimulated mouse dendritic cell. Suppresses maturation of mouse bone-marrow-derived dendritic cells (BMDCs). This chain is Salivary cystatin-L, found in Ixodes persulcatus (Taiga tick).